Here is a 279-residue protein sequence, read N- to C-terminus: Prohibitin-4, mitochondrial (279 aa).

An N-acetylglycine modification is found at Gly2. Topologically, residues 2-6 (GSQQV) are mitochondrial matrix. Residues 7 to 28 (AISFLTNLAKAAFGLGVAATAL) traverse the membrane as a helical; Signal-anchor for type II membrane protein segment. Residues 29–279 (NSSLYTVDGG…SMLFNLNPGR (251 aa)) are Mitochondrial intermembrane-facing.

This sequence belongs to the prohibitin family. Component of a prohibitin multimeric complex in mitochondrial membranes. In terms of tissue distribution, mostly expressed in proliferative tissues, including vasculature, shoot and root apical tissues. Accumulates in dry seeds.

Its subcellular location is the mitochondrion inner membrane. Functionally, prohibitin probably acts as a holdase/unfoldase for the stabilization of newly synthesized mitochondrial proteins. This is Prohibitin-4, mitochondrial (PHB4) from Arabidopsis thaliana (Mouse-ear cress).